We begin with the raw amino-acid sequence, 854 residues long: Armadillo repeat-containing protein 2 (854 aa).

3 disordered regions span residues 1–116 (MLSS…SFPK), 140–194 (QGML…PLLT), and 206–255 (EVSL…ETDT). Residues 58 to 73 (PASSRSPENRPPSSFS) are compositionally biased toward low complexity. Composition is skewed to polar residues over residues 74–87 (LHAS…SKPI) and 162–187 (KPVS…TGQL). ARM repeat units lie at residues 255-294 (TEVD…RTLE), 298-337 (MLGK…ALKV), 356-396 (EKND…ALKF), 401-442 (PGFL…HLLV), 455-496 (PLTR…KLTS), 499-540 (DCCA…NLTA), 544-583 (QARE…EAKP), 585-605 (AEAE…AIHP), 606-649 (RIGP…NLSF), 651-692 (QVKS…NLSQ), 694-733 (HDVC…NLTV), and 735-777 (KEKR…NFSE).

In terms of biological role, required for sperm flagellum axoneme organization and function. Involved in axonemal central pair complex assembly and/or stability. The polypeptide is Armadillo repeat-containing protein 2 (Mus musculus (Mouse)).